A 596-amino-acid polypeptide reads, in one-letter code: Putative terpenoid synthase 5 (596 aa).

Mg(2+) contacts are provided by aspartate 349, aspartate 353, asparagine 481, and aspartate 489. Residues 349–353 (DDTCD) carry the DDXXD motif motif.

Belongs to the terpene synthase family. Tpsa subfamily. Requires Mg(2+) as cofactor. It depends on Mn(2+) as a cofactor.

Its subcellular location is the cytoplasm. It participates in secondary metabolite biosynthesis; terpenoid biosynthesis. The protein is Putative terpenoid synthase 5 (TPS05) of Arabidopsis thaliana (Mouse-ear cress).